The sequence spans 454 residues: Type II methyltransferase M.MvaI (454 aa).

Belongs to the N(4)/N(6)-methyltransferase family. N(4) subfamily.

It catalyses the reaction a 2'-deoxycytidine in DNA + S-adenosyl-L-methionine = an N(4)-methyl-2'-deoxycytidine in DNA + S-adenosyl-L-homocysteine + H(+). Functionally, an alpha subtype methylase, recognizes the double-stranded sequence 5'-CCWGG-3', methylatES C-2 on both strands, and protects the DNA from cleavage by the MvaI endonuclease. The polypeptide is Type II methyltransferase M.MvaI (Kocuria varians (Micrococcus varians)).